We begin with the raw amino-acid sequence, 60 residues long: Cytochrome c oxidase subunit 7, mitochondrial (60 aa).

Topologically, residues 2–29 (ANKVIQLQKIFQSSTKPLWWRHPRSALY) are mitochondrial matrix. Residues 30–53 (LYPFYAIFAVAVVTPLLYIPNAIR) traverse the membrane as a helical segment. Topologically, residues 54 to 60 (GIKAKKA) are mitochondrial intermembrane.

The protein belongs to the cytochrome c oxidase VIIa family. In terms of assembly, component of the cytochrome c oxidase (complex IV, CIV), a multisubunit enzyme composed of 12 subunits. The complex is composed of a catalytic core of 3 subunits COX1, COX2 and COX3, encoded in the mitochondrial DNA, and 9 supernumerary subunits COX4, COX5A (or COX5B), COX6, COX7, COX8, COX9, COX12, COX13 and COX26, which are encoded in the nuclear genome. The complex exists as a monomer or a dimer and forms supercomplexes (SCs) in the inner mitochondrial membrane with a dimer of ubiquinol-cytochrome c oxidoreductase (cytochrome b-c1 complex, complex III, CIII), resulting in 2 different assemblies (supercomplexes III(2)IV and III(2)IV(2)).

It is found in the mitochondrion inner membrane. It functions in the pathway energy metabolism; oxidative phosphorylation. Its function is as follows. Component of the cytochrome c oxidase, the last enzyme in the mitochondrial electron transport chain which drives oxidative phosphorylation. The respiratory chain contains 3 multisubunit complexes succinate dehydrogenase (complex II, CII), ubiquinol-cytochrome c oxidoreductase (cytochrome b-c1 complex, complex III, CIII) and cytochrome c oxidase (complex IV, CIV), that cooperate to transfer electrons derived from NADH and succinate to molecular oxygen, creating an electrochemical gradient over the inner membrane that drives transmembrane transport and the ATP synthase. Cytochrome c oxidase is the component of the respiratory chain that catalyzes the reduction of oxygen to water. Electrons originating from reduced cytochrome c in the intermembrane space (IMS) are transferred via the dinuclear copper A center (CU(A)) of COX2 and heme A of COX1 to the active site in COX1, a binuclear center (BNC) formed by heme A3 and copper B (CU(B)). The BNC reduces molecular oxygen to 2 water molecules using 4 electrons from cytochrome c in the IMS and 4 protons from the mitochondrial matrix. The sequence is that of Cytochrome c oxidase subunit 7, mitochondrial (COX7) from Saccharomyces cerevisiae (strain ATCC 204508 / S288c) (Baker's yeast).